Here is a 216-residue protein sequence, read N- to C-terminus: Probable GTP-binding protein EngB (216 aa).

The region spanning 30–204 (SGLEVAFAGR…QMVLAGWLDL (175 aa)) is the EngB-type G domain. GTP-binding positions include 38–45 (GRSNAGKS), 64–68 (GRTQL), 82–85 (DLPG), 149–152 (TKAD), and 182–185 (LFSA). Mg(2+)-binding residues include serine 45 and threonine 66.

It belongs to the TRAFAC class TrmE-Era-EngA-EngB-Septin-like GTPase superfamily. EngB GTPase family. Requires Mg(2+) as cofactor.

In terms of biological role, necessary for normal cell division and for the maintenance of normal septation. In Ectopseudomonas mendocina (strain ymp) (Pseudomonas mendocina), this protein is Probable GTP-binding protein EngB.